We begin with the raw amino-acid sequence, 347 residues long: DNA-directed RNA polymerase subunit alpha (347 aa).

Residues 1 to 243 are alpha N-terminal domain (alpha-NTD); it reads MLFREGTRLI…DQISVFINFD (243 aa). The alpha C-terminal domain (alpha-CTD) stretch occupies residues 255 to 347; that stretch reads SGSSDLNDNL…EWKRKQHHEA (93 aa).

Belongs to the RNA polymerase alpha chain family. In terms of assembly, homodimer. The RNAP catalytic core consists of 2 alpha, 1 beta, 1 beta' and 1 omega subunit. When a sigma factor is associated with the core the holoenzyme is formed, which can initiate transcription.

It catalyses the reaction RNA(n) + a ribonucleoside 5'-triphosphate = RNA(n+1) + diphosphate. Functionally, DNA-dependent RNA polymerase catalyzes the transcription of DNA into RNA using the four ribonucleoside triphosphates as substrates. This chain is DNA-directed RNA polymerase subunit alpha, found in Lawsonia intracellularis (strain PHE/MN1-00).